The sequence spans 55 residues: Ribosome biogenesis protein Nop10 (55 aa).

Belongs to the NOP10 family.

Functionally, involved in ribosome biogenesis; more specifically in 18S rRNA pseudouridylation and in cleavage of pre-rRNA. In Methanosphaera stadtmanae (strain ATCC 43021 / DSM 3091 / JCM 11832 / MCB-3), this protein is Ribosome biogenesis protein Nop10.